The chain runs to 759 residues: TIR domain-containing adapter molecule 1 (759 aa).

The segment at 1 to 153 (MACTGPSLSG…CGWDVLGDLG (153 aa)) is TRIF-NTD. The TRAF6-binding motif lies at 84–91 (ETPEEPPD). Residues 207–210 (LEIS) carry the pLxIS motif motif. Position 210 is a phosphoserine (Ser210). Lys229 is covalently cross-linked (Glycyl lysine isopeptide (Lys-Gly) (interchain with G-Cter in ubiquitin)). A disordered region spans residues 241 to 296 (EPAPMGCQEPEEMSWPPSVEAADSPVRPSSPGPGLPEVTTDACPASPHDPPEVPEI). 2 consecutive short sequence motifs (TRAF6-binding) follow at residues 248-255 (QEPEEMSW) and 299-309 (HYPVECTDVPA). The disordered stretch occupies residues 340–426 (LSAQPRPPTP…PEPPPPELES (87 aa)). Positions 351–365 (VPQTSPSFPSASTSP) are enriched in low complexity. Residues 366 to 376 (FPSPSTPPEAH) are compositionally biased toward pro residues. Residues 430 to 590 (KFYNFVVLHA…QDARALREQS (161 aa)) enclose the TIR domain. The segment at 549–759 (LLDEHSKIFA…APEDNTRETE (211 aa)) is sufficient to induce apoptosis. The disordered stretch occupies residues 642-723 (GQGSLGTPPS…PPARPQSPGL (82 aa)). Residues 659–705 (HQPPPLPPWLGGTPPPIFPQPPQTFPQPPPTFPQPPPTFQQPPPACP) show a composition bias toward pro residues.

As to quaternary structure, homodimer. Found in a multi-helicase-TICAM1 complex at least composed of DHX36, DDX1, DDX21 and TICAM1; this complex exists in resting cells with or without poly(I:C) RNA ligand stimulation. Interacts (via TIR domain) with DDX21 (via C-terminus). Interacts (via TIR domain) with DHX36 (via C-terminus). Interacts with AZI2 and IRF7. Interacts with TICAM2 in TLR4 recruitment. Interaction with PIAS4 inhibits the TICAM1-induced NF-kappa-B, IRF and IFNB1 activation. Interacts with IKBKB and IKBKE. Interaction with SARM1 blocks TICAM1-dependent transcription factor activation. Interacts with TRAF3. Interacts (when phosphorylated) with IRF3; following activation and phosphorylation on the pLxIS motif by TBK1, recruits IRF3. Interacts with TBK1, TRAF6 and RIPK1 and these interactions are enhanced in the presence of WDFY1. Interacts with TRAFD1. Interacts with UBQLN1 (via UBA domain). Interacts with TLR4 in response to LPS in a WDFY1-dependent manner. Interacts with WDFY1 in response to poly(I:C). Interacts (via the TIR domain) with TLR3 in response to poly(I:C) and this interaction is enhanced in the presence of WDFY1. Interacts with TRIM56. Component of a multi-helicase-TICAM1 complex that acts as a cytoplasmic sensor of viral double-stranded RNA (dsRNA) and plays a role in the activation of a cascade of antiviral responses including the induction of pro-inflammatory cytokines. Interacts (via the TIR domain) with TLR5. Interacts with TRIM8. Interacts with TAX1BP1 and TRIM32; these interactions target TICAM1 to TAX1BP1-mediated selective autophagic degradation. Interacts with DDX50. Phosphorylated by TBK1. Following activation, phosphorylated by TBK1 at Ser-210 in the pLxIS motif. The phosphorylated pLxIS motif constitutes an IRF3-binding motif, leading to recruitment of the transcription factor IRF3 to induce type-I interferons and other cytokines. In terms of processing, polyubiquitinated at Lys-229 by TRIM38 with 'Lys-48'-linked chains, leading to proteasomal degradation. Polyubiquitinated with 'Lys-6' and 'Lys-33'-linked chains in a TRIM8-dependent manner.

The protein localises to the cytoplasmic vesicle. Its subcellular location is the autophagosome. It localises to the cytoplasm. The protein resides in the cytosol. It is found in the mitochondrion. Functionally, involved in innate immunity against invading pathogens. Adapter used by TLR3, TLR4 (through TICAM2) and TLR5 to mediate NF-kappa-B and interferon-regulatory factor (IRF) activation, and to induce apoptosis. Ligand binding to these receptors results in TRIF recruitment through its TIR domain. Distinct protein-interaction motifs allow recruitment of the effector proteins TBK1, TRAF6 and RIPK1, which in turn, lead to the activation of transcription factors IRF3 and IRF7, NF-kappa-B and FADD respectively. Phosphorylation by TBK1 on the pLxIS motif leads to recruitment and subsequent activation of the transcription factor IRF3 to induce expression of type I interferon and exert a potent immunity against invading pathogens. Component of a multi-helicase-TICAM1 complex that acts as a cytoplasmic sensor of viral double-stranded RNA (dsRNA) and plays a role in the activation of a cascade of antiviral responses including the induction of pro-inflammatory cytokines. The polypeptide is TIR domain-containing adapter molecule 1 (TICAM1) (Bos taurus (Bovine)).